Here is a 418-residue protein sequence, read N- to C-terminus: Serine--tRNA ligase (418 aa).

L-serine is bound at residue 231 to 233 (TAE). 262-264 (RSE) is an ATP binding site. L-serine is bound at residue glutamate 285. Residue 349-352 (EISS) coordinates ATP. Serine 385 is an L-serine binding site.

Belongs to the class-II aminoacyl-tRNA synthetase family. Type-1 seryl-tRNA synthetase subfamily. As to quaternary structure, homodimer. The tRNA molecule binds across the dimer.

It localises to the cytoplasm. It carries out the reaction tRNA(Ser) + L-serine + ATP = L-seryl-tRNA(Ser) + AMP + diphosphate + H(+). It catalyses the reaction tRNA(Sec) + L-serine + ATP = L-seryl-tRNA(Sec) + AMP + diphosphate + H(+). It participates in aminoacyl-tRNA biosynthesis; selenocysteinyl-tRNA(Sec) biosynthesis; L-seryl-tRNA(Sec) from L-serine and tRNA(Sec): step 1/1. Functionally, catalyzes the attachment of serine to tRNA(Ser). Is also able to aminoacylate tRNA(Sec) with serine, to form the misacylated tRNA L-seryl-tRNA(Sec), which will be further converted into selenocysteinyl-tRNA(Sec). In Ureaplasma parvum serovar 3 (strain ATCC 27815 / 27 / NCTC 11736), this protein is Serine--tRNA ligase.